A 38-amino-acid polypeptide reads, in one-letter code: A2-specific pheromone (38 aa).

Cys35 is subject to Cysteine methyl ester. Cys35 carries the S-farnesyl cysteine lipid modification. Positions Leu36–Ala38 are cleaved as a propeptide — removed in mature form.

It localises to the cell membrane. Mating pheromone for A2 allele. In Mycosarcoma maydis (Corn smut fungus), this protein is A2-specific pheromone (MFA2).